The following is a 537-amino-acid chain: MMSRIEAYQSDIAVLMDPETVLLPDFISALSYAHELGRDWLLVSSSVEIPRFPFHWDETRHFWRQDNGKRVRFRELQKMISLRSLQSNSSASKMIMAWNNIDMPLHCGVLPPFLYQRGTHNQWIINEAMSCKRRFVFDATSTISSFFLGNAENIYNRSDNVSEPKTRNWEYVGNSHLGQLYGSLYSRSYTLPKLLKCNRRYIFVSASERSTDLSIPKGKSLGFRTREKISACITRTKSRSLKLDFVQKDETVPPLKFPFDLESLLPLVADKNRTVVLSVAGYSYKDMLMSWVCRLRRLKVPNFLVCALDDETYQFSILQGLPVFFDPYAPKNISFNDCHFGSKCFQRVTKVKSRTVLKILKLGYNVLLSDVDVYWFRNPLPLLQSFGPSVLAAQSDEYNTTAPINRPRRLNSGFYFARSDSPTIAAMEKVVKHAATSGLSEQPSFYDTLCGEGGAYRLGDDRCVEPETNLTVQFLDRELFPNGAYGDLWLKEDVRAECEKKHCFVLHNNWISGRLKKLERQMMKGLWEYDASMRMCV.

The DXD motif signature appears at 370 to 372 (DVD).

Belongs to the glycosyltransferase 77 family.

Functionally, beta-arabinofuranosyltransferase that transfers specifically an arabinosyl residue from UDP-arabinofuranose to the monosaccharide galactose or beta-methyl-galactoside in vitro. Catalyzes the addition of a beta-arabinofuranose residue onto a beta-galactosyl residue of an Yariv-precipitable wall polymer in vivo. The protein is Beta-arabinofuranosyltransferase RAY1 of Arabidopsis thaliana (Mouse-ear cress).